The primary structure comprises 416 residues: Homeobox even-skipped homolog protein 1 (416 aa).

2 disordered regions span residues Ala30–Tyr120 and Tyr138–Ser178. Low complexity predominate over residues Gly72–Ala82. Positions Asp102–Asp114 are enriched in polar residues. The homeobox DNA-binding region spans Met183–Arg242.

Belongs to the even-skipped homeobox family.

The protein resides in the nucleus. Its function is as follows. May play a role in the specification of neuronal cell types. May play a role in the dorsoventral specification of mesodermal cell fate. In Mus musculus (Mouse), this protein is Homeobox even-skipped homolog protein 1 (Evx1).